The chain runs to 337 residues: Protoheme IX farnesyltransferase (337 aa).

The span at 1–17 shows a compositional bias: polar residues; that stretch reads MPFSISKDTVSNQTTHV. A disordered region spans residues 1-41; it reads MPFSISKDTVSNQTTHVATAPASQRPDPVETKVEQEQGRPR. Positions 27 to 41 are enriched in basic and acidic residues; the sequence is DPVETKVEQEQGRPR. A run of 8 helical transmembrane segments spans residues 59-79, 81-101, 130-150, 153-173, 196-216, 250-270, 271-291, and 311-331; these read IIELLLVTTLPVMFLASHGVP, LGLVIATMVGGLFAAASANVF, SALIYGIILWIIATIILGFGA, LSAALALIANLFYVFVYSMLL, WTAVTGSVGWEPLVLFFIVFW, VAIQILIYTVMTVAISLVLWP, VAHMGWIYVVVAVVSGAVFIV, and PMGLFHWSNTYLSLLFLAIAV.

This sequence belongs to the UbiA prenyltransferase family. Protoheme IX farnesyltransferase subfamily.

The protein localises to the cell membrane. It carries out the reaction heme b + (2E,6E)-farnesyl diphosphate + H2O = Fe(II)-heme o + diphosphate. It participates in porphyrin-containing compound metabolism; heme O biosynthesis; heme O from protoheme: step 1/1. Functionally, converts heme B (protoheme IX) to heme O by substitution of the vinyl group on carbon 2 of heme B porphyrin ring with a hydroxyethyl farnesyl side group. The chain is Protoheme IX farnesyltransferase from Cutibacterium acnes (strain DSM 16379 / KPA171202) (Propionibacterium acnes).